A 519-amino-acid chain; its full sequence is Alkaline phosphatase, tissue-nonspecific isozyme (519 aa).

Residues 1 to 16 form the signal peptide; sequence MKAFLLTLLAQLCSAS. Asp59 contacts Mg(2+). Asp59 and Ser109 together coordinate Zn(2+). Ser109 acts as the Phosphoserine intermediate in catalysis. Cys138 and Cys200 form a disulfide bridge. An N-linked (GlcNAc...) asparagine glycan is attached at Asn139. Thr172 contacts Mg(2+). N-linked (GlcNAc...) asparagine glycosylation occurs at Asn229. Glu234 contacts Ca(2+). An N-linked (GlcNAc...) asparagine glycan is attached at Asn278. Phe289 and Glu290 together coordinate Ca(2+). N-linked (GlcNAc...) asparagine glycosylation is present at Asn302. Asp305 is a binding site for Ca(2+). Glu331 is a binding site for Mg(2+). Residues Asp336, His340, Asp377, and His378 each contribute to the Zn(2+) site. N-linked (GlcNAc...) asparagine glycosylation is present at Asn429. His453 contributes to the Zn(2+) binding site. Cys488 and Cys496 are disulfide-bonded. Residue Ser498 is the site of GPI-anchor amidated serine attachment. A propeptide spans 499–519 (removed in mature form); sequence AARPAATATLLPVLLLLLLLC.

The protein belongs to the alkaline phosphatase family. Homodimer. Mg(2+) is required as a cofactor. It depends on Zn(2+) as a cofactor. The cofactor is Ca(2+).

The protein localises to the cell membrane. It localises to the extracellular vesicle membrane. The catalysed reaction is a phosphate monoester + H2O = an alcohol + phosphate. It catalyses the reaction diphosphate + H2O = 2 phosphate + H(+). The enzyme catalyses pyridoxal 5'-phosphate + H2O = pyridoxal + phosphate. It carries out the reaction phosphoethanolamine + H2O = ethanolamine + phosphate. The catalysed reaction is ATP + H2O = ADP + phosphate + H(+). It catalyses the reaction ADP + H2O = AMP + phosphate + H(+). The enzyme catalyses AMP + H2O = adenosine + phosphate. Its function is as follows. Alkaline phosphatase that metabolizes various phosphate compounds and plays a key role in skeletal mineralization and adaptive thermogenesis. Has broad substrate specificity and can hydrolyze a considerable variety of compounds: however, only a few substrates, such as diphosphate (inorganic pyrophosphate; PPi) and pyridoxal 5'-phosphate (PLP) are natural substrates. Plays an essential role in skeletal and dental mineralization via its ability to hydrolyze extracellular diphosphate, a potent mineralization inhibitor, to phosphate: it thereby promotes hydroxyapatite crystal formation and increases inorganic phosphate concentration. Catalyzes dephosphorylation of PLP to pyridoxal (PL), the transportable form of vitamin B6, in order to provide a sufficient amount of PLP in the brain, an essential cofactor for enzymes catalyzing the synthesis of diverse neurotransmitters. Additionally, also able to mediate ATP degradation in a stepwise manner to adenosine, thereby regulating the availability of ligands for purinergic receptors. Involved in the establishment and growth of feather germs. This chain is Alkaline phosphatase, tissue-nonspecific isozyme (ALPL), found in Gallus gallus (Chicken).